The chain runs to 968 residues: RNA polymerase-associated protein RapA (968 aa).

The Helicase ATP-binding domain maps to 164–334; that stretch reads DVGRRHAPRV…FARLRLLDPN (171 aa). 177–184 contacts ATP; sequence DEVGLGKT. A DEAH box motif is present at residues 280-283; that stretch reads DEAH. In terms of domain architecture, Helicase C-terminal spans 490-662; it reads RVEWLMGYLT…YLASPDETEG (173 aa).

Belongs to the SNF2/RAD54 helicase family. RapA subfamily. Interacts with the RNAP. Has a higher affinity for the core RNAP than for the holoenzyme. Its ATPase activity is stimulated by binding to RNAP.

Its function is as follows. Transcription regulator that activates transcription by stimulating RNA polymerase (RNAP) recycling in case of stress conditions such as supercoiled DNA or high salt concentrations. Probably acts by releasing the RNAP, when it is trapped or immobilized on tightly supercoiled DNA. Does not activate transcription on linear DNA. Probably not involved in DNA repair. In Escherichia coli O81 (strain ED1a), this protein is RNA polymerase-associated protein RapA.